A 281-amino-acid polypeptide reads, in one-letter code: Acetyl-coenzyme A carboxylase carboxyl transferase subunit beta (281 aa).

The region spanning I23–N281 is the CoA carboxyltransferase N-terminal domain. The Zn(2+) site is built by C27, C30, C46, and C49. A C4-type zinc finger spans residues C27–C49.

It belongs to the AccD/PCCB family. In terms of assembly, acetyl-CoA carboxylase is a heterohexamer composed of biotin carboxyl carrier protein (AccB), biotin carboxylase (AccC) and two subunits each of ACCase subunit alpha (AccA) and ACCase subunit beta (AccD). Requires Zn(2+) as cofactor.

It localises to the cytoplasm. The catalysed reaction is N(6)-carboxybiotinyl-L-lysyl-[protein] + acetyl-CoA = N(6)-biotinyl-L-lysyl-[protein] + malonyl-CoA. It participates in lipid metabolism; malonyl-CoA biosynthesis; malonyl-CoA from acetyl-CoA: step 1/1. In terms of biological role, component of the acetyl coenzyme A carboxylase (ACC) complex. Biotin carboxylase (BC) catalyzes the carboxylation of biotin on its carrier protein (BCCP) and then the CO(2) group is transferred by the transcarboxylase to acetyl-CoA to form malonyl-CoA. The chain is Acetyl-coenzyme A carboxylase carboxyl transferase subunit beta from Alteromonas mediterranea (strain DSM 17117 / CIP 110805 / LMG 28347 / Deep ecotype).